A 279-amino-acid chain; its full sequence is Putative ABC transporter ATP-binding protein CA_C1368 (279 aa).

Residues 4–239 form the ABC transporter domain; it reads ISINNVDYIY…KKVLRNINLR (236 aa). 37 to 44 is an ATP binding site; the sequence is GPNGAGKS.

This sequence belongs to the ABC transporter superfamily.

The protein resides in the cell membrane. Probably part of an ABC transporter complex. Responsible for energy coupling to the transport system. The polypeptide is Putative ABC transporter ATP-binding protein CA_C1368 (Clostridium acetobutylicum (strain ATCC 824 / DSM 792 / JCM 1419 / IAM 19013 / LMG 5710 / NBRC 13948 / NRRL B-527 / VKM B-1787 / 2291 / W)).